A 553-amino-acid polypeptide reads, in one-letter code: MSDIALTVSILALVAVVGLFIGNVKFRGIGLGIGGVLFGGIIVGHFVSQAGMTLSSDMLHVIQEFGLILFVYTIGIQVGPGFFASLRVSGLRLNLFAVLIVIIGGLVTAILHKLFDIPLPVVLGIFSGAVTNTPALGAGQQILRDLGTPMEMVDQMGMSYAMAYPFGICGILFTMWMLRVIFRVNVETEAQQHESSRTNGGALIKTINIRVENPNLHDLAIKDVPILNGDKIICSRLKREETLKVPSPDTIIQLGDLLHLVGQPADLHNAQLVIGQEVDTSLSTKDTDLRVERVVVTNENVLGKRIRDLHFKERYDVVISRLNRAGVELVASGDISLQFGDILNLVGRPSAIDAVANVLGNAQQKLQQVQMLPVFIGIGLGVLLGSIPVFVPGFPAALKLGLAGGLLIMALILGRIGSIGKLYWFMPPSANLALRELGIVLFLSVVGLKSGGDFVNTLVNGEGLSWIGYGALITAVPLITVGILARMLAKMNYLTMCGMLAGSMTDPPALAFANNLHPTSGAAALSYATVYPLVMFLRIITPQLLAVLFWSIG.

A run of 5 helical transmembrane segments spans residues 4–24, 28–48, 65–85, 95–115, and 158–178; these read IALT…IGNV, GIGL…HFVS, FGLI…FFAS, LFAV…HKLF, and MSYA…MWML. RCK C-terminal domains follow at residues 191–276 and 279–361; these read QQHE…VIGQ and DTSL…VLGN. 6 helical membrane-spanning segments follow: residues 371–391, 393–413, 431–448, 464–484, 493–513, and 533–553; these read MLPV…PVFV, GFPA…ALIL, NLAL…VVGL, LSWI…VGIL, YLTM…LAFA, and LVMF…WSIG.

This sequence belongs to the AAE transporter (TC 2.A.81) family. YidE subfamily.

The protein localises to the cell membrane. This Shigella sonnei (strain Ss046) protein is Putative transport protein YidE.